The chain runs to 269 residues: 2-dehydro-3-deoxyphosphooctonate aldolase (269 aa).

It belongs to the KdsA family.

It localises to the cytoplasm. It carries out the reaction D-arabinose 5-phosphate + phosphoenolpyruvate + H2O = 3-deoxy-alpha-D-manno-2-octulosonate-8-phosphate + phosphate. It participates in carbohydrate biosynthesis; 3-deoxy-D-manno-octulosonate biosynthesis; 3-deoxy-D-manno-octulosonate from D-ribulose 5-phosphate: step 2/3. Its pathway is bacterial outer membrane biogenesis; lipopolysaccharide biosynthesis. The chain is 2-dehydro-3-deoxyphosphooctonate aldolase from Chlamydia abortus (strain DSM 27085 / S26/3) (Chlamydophila abortus).